The sequence spans 89 residues: Mapacalcine (89 aa).

A Glutamine amide modification is found at Gln89.

Homodimer. Post-translationally, contains disulfide bonds which may also be involved in dimerization.

Blocks calcium currents via interaction with a yet unknown target protein. Has no effect on L-type, T-type, N-type or P/Q-type voltage-gated calcium channels (VGCC). Has no effect on voltage-gated potassium or chloride channels. Blocks non-L-type VGCC calcium currents in mouse duodenal myocytes (IC(50)=0.2 uM). Blocks calcium influx induced by hypoxia/reoxygenation in rat hepatocytes. The chain is Mapacalcine from Pione vastifica (Boring sponge).